A 142-amino-acid polypeptide reads, in one-letter code: Large ribosomal subunit protein uL11 (142 aa).

Belongs to the universal ribosomal protein uL11 family. As to quaternary structure, part of the ribosomal stalk of the 50S ribosomal subunit. Interacts with L10 and the large rRNA to form the base of the stalk. L10 forms an elongated spine to which L12 dimers bind in a sequential fashion forming a multimeric L10(L12)X complex. One or more lysine residues are methylated.

Functionally, forms part of the ribosomal stalk which helps the ribosome interact with GTP-bound translation factors. This is Large ribosomal subunit protein uL11 from Pectobacterium atrosepticum (strain SCRI 1043 / ATCC BAA-672) (Erwinia carotovora subsp. atroseptica).